We begin with the raw amino-acid sequence, 292 residues long: MSKKYPIISVVGSSGAGTSTVKNTFEQIFRREGVKSVSIEGDAFHRFNRADMKAELERRYAAGDATFSHFSYEANELKELERVFREYGETGRGRTRTYVHDDAEAARTGVAPGNFTQWAPFEDNSDLLFYEGLHGCVVNDEVNLVRHADLKLGVAPVINLEWIQKIHRDRAQRGYTTEAVTDVILRRMYAYVHCIVPQFSETDINFQRVPVVDTSNPFIARWIPTPDESLIVIRFKNPRGIDCPYLTSMIAGSWMSRANSIVVPGNKQDLAMQLILTPLIERMVREARRARA.

12 to 20 (GSSGAGTST) is an ATP binding site.

Belongs to the phosphoribulokinase family.

It carries out the reaction D-ribulose 5-phosphate + ATP = D-ribulose 1,5-bisphosphate + ADP + H(+). The protein operates within carbohydrate biosynthesis; Calvin cycle. The chain is Phosphoribulokinase 2 (prkB) from Cereibacter sphaeroides (Rhodobacter sphaeroides).